A 241-amino-acid chain; its full sequence is Ribonuclease PH (241 aa).

Phosphate is bound by residues Arg-89 and Gly-127–Arg-129.

The protein belongs to the RNase PH family. Homohexameric ring arranged as a trimer of dimers.

It carries out the reaction tRNA(n+1) + phosphate = tRNA(n) + a ribonucleoside 5'-diphosphate. Its function is as follows. Phosphorolytic 3'-5' exoribonuclease that plays an important role in tRNA 3'-end maturation. Removes nucleotide residues following the 3'-CCA terminus of tRNAs; can also add nucleotides to the ends of RNA molecules by using nucleoside diphosphates as substrates, but this may not be physiologically important. Probably plays a role in initiation of 16S rRNA degradation (leading to ribosome degradation) during starvation. This Stenotrophomonas maltophilia (strain K279a) protein is Ribonuclease PH.